The chain runs to 269 residues: MSDSKYQIALIGGSGRMGRAIITVLSSSSKSTLSSSVVSGGSVFLGMDSGLHSGIKQNGVNFSSDLEAAVRSADCVIDFSTYQNLDFTLKACIQHRKPVVIGTTGLTELQKDALKVASKEIGIVYSPNMSIGVNLLFKLTEIAAKAMGENSDIEIQDIHHRHKKDAPSGTAEKLKSILLETLGRTSKNVIHGRHGILKERDPREIGIHTFRAGEVIGDHTVYFFTPEERIEITHRAQDRKTFAVGSIHAAEFLVGRKPGLYDMFAVLGL.

NAD(+) is bound by residues 12–17 (GGSGRM), 102–104 (GTT), and 126–129 (SPNM). His-159 acts as the Proton donor/acceptor in catalysis. (S)-2,3,4,5-tetrahydrodipicolinate is bound at residue His-160. The active-site Proton donor is the Lys-163. 169 to 170 (GT) serves as a coordination point for (S)-2,3,4,5-tetrahydrodipicolinate.

This sequence belongs to the DapB family.

Its subcellular location is the cytoplasm. It carries out the reaction (S)-2,3,4,5-tetrahydrodipicolinate + NAD(+) + H2O = (2S,4S)-4-hydroxy-2,3,4,5-tetrahydrodipicolinate + NADH + H(+). The enzyme catalyses (S)-2,3,4,5-tetrahydrodipicolinate + NADP(+) + H2O = (2S,4S)-4-hydroxy-2,3,4,5-tetrahydrodipicolinate + NADPH + H(+). It participates in amino-acid biosynthesis; L-lysine biosynthesis via DAP pathway; (S)-tetrahydrodipicolinate from L-aspartate: step 4/4. In terms of biological role, catalyzes the conversion of 4-hydroxy-tetrahydrodipicolinate (HTPA) to tetrahydrodipicolinate. In Leptospira borgpetersenii serovar Hardjo-bovis (strain JB197), this protein is 4-hydroxy-tetrahydrodipicolinate reductase.